The chain runs to 100 residues: Large ribosomal subunit protein uL23 (100 aa).

It belongs to the universal ribosomal protein uL23 family. Part of the 50S ribosomal subunit. Contacts protein L29, and trigger factor when it is bound to the ribosome.

Its function is as follows. One of the early assembly proteins it binds 23S rRNA. One of the proteins that surrounds the polypeptide exit tunnel on the outside of the ribosome. Forms the main docking site for trigger factor binding to the ribosome. This chain is Large ribosomal subunit protein uL23, found in Pseudoalteromonas translucida (strain TAC 125).